Reading from the N-terminus, the 205-residue chain is tRNA 2-(methylsulfanyl)-N(6)-isopentenyladenosine(37) hydroxylase (205 aa).

Positions 38, 69, 72, 122, 151, and 154 each coordinate Fe cation.

The protein belongs to the MiaE family. Homodimer. Fe cation serves as cofactor.

It carries out the reaction 2-methylsulfanyl-N(6)-dimethylallyladenosine(37) in tRNA + AH2 + O2 = N(6)-[(2E)-4-hydroxy-3-methylbut-2-en-1-yl]-2-(methylsulfanyl)adenosine(37) in tRNA + A + H2O. It functions in the pathway tRNA modification; 2-methylthio-N-6-(cis-hydroxy)isopentenyl adenosine-tRNA biosynthesis. Functionally, involved in specific tRNA modification. Catalyzes the oxygen-dependent hydroxylation of 2-methylthio-N-6-isopentenyl adenosine (ms2i6A) to produce 2-methylthio-N-6-(cis-hydroxy)isopentenyl adenosine (ms2io6A) at position 37 in tRNAs. The chain is tRNA 2-(methylsulfanyl)-N(6)-isopentenyladenosine(37) hydroxylase from Pseudomonas putida (strain ATCC 47054 / DSM 6125 / CFBP 8728 / NCIMB 11950 / KT2440).